The sequence spans 168 residues: Cyanate hydratase (168 aa).

Residues Arg-94, Glu-97, and Ser-120 contribute to the active site.

It belongs to the cyanase family.

It carries out the reaction cyanate + hydrogencarbonate + 3 H(+) = NH4(+) + 2 CO2. Catalyzes the reaction of cyanate with bicarbonate to produce ammonia and carbon dioxide. This Oryza sativa subsp. indica (Rice) protein is Cyanate hydratase.